A 202-amino-acid chain; its full sequence is Coiled-coil domain-containing protein 85B (202 aa).

Methionine 1 is subject to N-acetylmethionine. Coiled coils occupy residues 44-82 (RLMQ…DLCC) and 118-141 (QKLA…KELC). The span at 152-162 (GGPGGAVGSGA) shows a compositional bias: gly residues. Residues 152-202 (GGPGGAVGSGAGPTPELALPPCGPRDLGDGSSSTGSVGSPDQLPLACSPDD) form a disordered region. Over residues 180-190 (DGSSSTGSVGS) the composition is skewed to low complexity.

Belongs to the CCDC85 family. Interacts with CEBPB. May interact with CEBPD. Interacts with EURL. Interacts with MCRS1. Interacts with TCF7L2; competes with CTNNB1. Interacts with ANKRD26. Interacts with the beta-catenin family proteins ARVCF, CTNND1, CTNND2 and PKP4. As to expression, expressed in white and brown adipose tissue.

The protein localises to the nucleus. It localises to the cytoplasm. The protein resides in the cytoskeleton. Its subcellular location is the microtubule organizing center. It is found in the centrosome. The protein localises to the cell junction. It localises to the adherens junction. Functionally, functions as a transcriptional repressor. May inhibit the activity of CTNNB1 in a TP53-dependent manner and thus regulate cell growth. May function in adipocyte differentiation, negatively regulating mitotic clonal expansion. Plays a role in cell-cell adhesion and epithelium development through its interaction with proteins of the beta-catenin family. This Mus musculus (Mouse) protein is Coiled-coil domain-containing protein 85B (Ccdc85b).